Reading from the N-terminus, the 279-residue chain is Pantothenate synthetase (279 aa).

26–33 (MGNLHDGH) is a binding site for ATP. H33 (proton donor) is an active-site residue. Q57 provides a ligand contact to (R)-pantoate. Residue Q57 participates in beta-alanine binding. Residue 144 to 147 (GKKD) participates in ATP binding. Q150 contributes to the (R)-pantoate binding site. 181-184 (LSSR) contacts ATP.

It belongs to the pantothenate synthetase family. In terms of assembly, homodimer.

It localises to the cytoplasm. It carries out the reaction (R)-pantoate + beta-alanine + ATP = (R)-pantothenate + AMP + diphosphate + H(+). It functions in the pathway cofactor biosynthesis; (R)-pantothenate biosynthesis; (R)-pantothenate from (R)-pantoate and beta-alanine: step 1/1. Catalyzes the condensation of pantoate with beta-alanine in an ATP-dependent reaction via a pantoyl-adenylate intermediate. This chain is Pantothenate synthetase, found in Janthinobacterium sp. (strain Marseille) (Minibacterium massiliensis).